Here is a 71-residue protein sequence, read N- to C-terminus: Long neurotoxin 1 (71 aa).

5 cysteine pairs are disulfide-bonded: Cys-3-Cys-20, Cys-14-Cys-41, Cys-26-Cys-30, Cys-45-Cys-56, and Cys-57-Cys-62.

Belongs to the three-finger toxin family. Long-chain subfamily. Type II alpha-neurotoxin sub-subfamily. Expressed by the venom gland.

Its subcellular location is the secreted. Functionally, binds with high affinity to muscular (alpha-1/CHRNA1) and neuronal (alpha-7/CHRNA7) nicotinic acetylcholine receptor (nAChR) and inhibits acetylcholine from binding to the receptor, thereby impairing neuromuscular and neuronal transmission. This Naja naja (Indian cobra) protein is Long neurotoxin 1.